Consider the following 425-residue polypeptide: MDIHDYMQTLGRQARAASRVLATASTADKNAALVAMAAAIREQTGELLAANARDLDEARAAGLEAALIDRLTLTAKGIEAMAEGLEQVAGLPDPIGEITDVKRRPSGIQVGKMRVPLGVIGIIYEARPNVTADAAALCLKSGNAAILRGGKEALHCNQAIAQCVRTGLAAAGLPETSVQVVETTDRAAVGHLITMPEFVDVIVPRGGKGLIERISKEARVPVIKHLDGNCHVYIDRDADVAKVVPIVENAKTQRYGTCNTAESLLVAREVAPRLLPEIGRMLATKGVEMRGCEQSLAILRAAGIAADKLRAASEQDWSEEYLAPVIAVKVVADLDEAIAHINTYSSGHTEAIVTENYTSAMRFLREVDSSSVMVNASTRFADGFEYGLGAEIGISTDKIHARGPVGLDGLTSQKWIVFGNGEIRG.

Belongs to the gamma-glutamyl phosphate reductase family.

The protein localises to the cytoplasm. It carries out the reaction L-glutamate 5-semialdehyde + phosphate + NADP(+) = L-glutamyl 5-phosphate + NADPH + H(+). The protein operates within amino-acid biosynthesis; L-proline biosynthesis; L-glutamate 5-semialdehyde from L-glutamate: step 2/2. Its function is as follows. Catalyzes the NADPH-dependent reduction of L-glutamate 5-phosphate into L-glutamate 5-semialdehyde and phosphate. The product spontaneously undergoes cyclization to form 1-pyrroline-5-carboxylate. This is Gamma-glutamyl phosphate reductase from Aromatoleum aromaticum (strain DSM 19018 / LMG 30748 / EbN1) (Azoarcus sp. (strain EbN1)).